Consider the following 1288-residue polypeptide: Mitogen-activated protein kinase kinase kinase 6 (1288 aa).

Residues 648-906 (TGERLVLGKG…AQTLLGDPFL (259 aa)) form the Protein kinase domain. ATP is bound by residues 654–662 (LGKGTYGVV) and Lys677. Asp771 (proton acceptor) is an active-site residue. Thr806 carries the post-translational modification Phosphothreonine. Residues 899–997 (TLLGDPFLQP…SSGLSLLHQE (99 aa)) form a disordered region. Over residues 914 to 952 (SPSSPRHAPRPSDAPSASPTPSANSTTQSQTFPCPQAPS) the composition is skewed to low complexity. Ser964 and Ser984 each carry phosphoserine. A compositionally biased stretch (low complexity) spans 980 to 989 (EEPASPEESS). Positions 1004 to 1029 (LAAVLEQELPALAENLHQEQKQEQGA) form a coiled coil. The span at 1123 to 1134 (VEKEAVSPRSEE) shows a compositional bias: basic and acidic residues. The tract at residues 1123–1157 (VEKEAVSPRSEELSNEGDSQQSPGQQSPLPVEPEQ) is disordered. Ser1129 and Ser1149 each carry phosphoserine. The span at 1141–1151 (SQQSPGQQSPL) shows a compositional bias: low complexity. Positions 1166–1205 (LSLLRAETDRLREILAGKEREYQALVQRALQRLNEEARTY) form a coiled coil.

It belongs to the protein kinase superfamily. STE Ser/Thr protein kinase family. MAP kinase kinase kinase subfamily. In terms of assembly, binds both upstream activators and downstream substrates in multimolecular complexes. Mg(2+) is required as a cofactor.

The enzyme catalyses L-seryl-[protein] + ATP = O-phospho-L-seryl-[protein] + ADP + H(+). It carries out the reaction L-threonyl-[protein] + ATP = O-phospho-L-threonyl-[protein] + ADP + H(+). Activated by phosphorylation on Thr-806. Catalytically active only when complexed with MAP3K5, with MAP3K5 supporting the stability and the active configuration of MAP3K6 and MAP3K6 activating MAP3K5 by direct phosphorylation. Its function is as follows. Component of a protein kinase signal transduction cascade. Activates the JNK, but not ERK or p38 kinase pathways. This Homo sapiens (Human) protein is Mitogen-activated protein kinase kinase kinase 6 (MAP3K6).